A 192-amino-acid polypeptide reads, in one-letter code: uncharacterized protein (192 aa).

One can recognise a Nudix hydrolase domain in the interval 29-160; it reads HRQAAVLIPI…PLDIYRRGDS (132 aa). The short motif at 67–89 is the Nudix box element; that stretch reads GAVDDTDASVIAAALREAEEEVA. Positions 83 and 87 each coordinate Mg(2+).

The protein belongs to the Nudix hydrolase family. PCD1 subfamily. Mn(2+) serves as cofactor. Mg(2+) is required as a cofactor.

Its function is as follows. Probably mediates the hydrolysis of some nucleoside diphosphate derivatives. This is an uncharacterized protein from Escherichia coli O139:H28 (strain E24377A / ETEC).